Consider the following 662-residue polypeptide: Hypoxia-inducible factor 3-alpha (662 aa).

Residues 1-25 (MDWDQDRSNTELRKEKSRDAARSRR) are disordered. A bHLH domain is found at 12 to 65 (LRKEKSRDAARSRRSQETEVLYQLAHTLPFARGVSAHLDKASIMRLTISYLRMH). The segment at 75-98 (QVEKGGEPLDACYLKALEGFVMVL) is nuclear localization signal (isoform 2). PAS domains follow at residues 80-150 (GEPL…PNLS) and 225-295 (PHPA…LSKG). Residues 228–272 (ASLEPPLGRGAFLSRHSLDMKFTYCDERIAEVAGYSPDDLIGCSA) form a nuclear export signal (isoform 2) region. Disordered regions lie at residues 352–377 (EQTE…GNSV) and 416–446 (PILD…DLPD). The LRRLL motif lies at 414-418 (MAPIL). Low complexity predominate over residues 426–437 (TPSTPQATRRPQ). Residues 448 to 581 (LTVGLENAHR…SEDKGLELLE (134 aa)) are ODD. The interval 450-501 (VGLENAHRLSTAQKNKTVETDLDIAQDPDTLDLEMLAPYISMDDDFQLNSSE) is NTAD. A Glycyl lysine isopeptide (Lys-Gly) (interchain with G-Cter in ubiquitin) cross-link involves residue Lys463. The short motif at 485–492 (LAPYISMD) is the LAPYISMD element. Pro487 is subject to 4-hydroxyproline. Positions 500–595 (SEQLPKVHRR…KRSPRLEPGS (96 aa)) are disordered. The segment covering 505–521 (KVHRRPPRVARRPRARS) has biased composition (basic residues). Lys565 is covalently cross-linked (Glycyl lysine isopeptide (Lys-Gly) (interchain with G-Cter in ubiquitin)). Basic and acidic residues predominate over residues 572–584 (SEDKGLELLETKP).

In terms of assembly, isoform 1 interacts with ARNT. Isoform 2 interacts with HIF1A. Isoform 2 interacts EPAS1. Isoform 2 interacts (via C-terminus domain) with BAD; the interaction reduces the binding between BAD and BAX. Isoform 2 (via C-terminus domain) interacts with BCL2L2 and MCL1. Interacts with VHL. Post-translationally, in normoxia, hydroxylated on Pro-487 in the oxygen-dependent degradation domain (ODD) by PHD. The hydroxylated proline promotes interaction with VHL, initiating rapid ubiquitination and subsequent proteasomal degradation. Ubiquitinated; ubiquitination occurs in a VHL- and oxygen-dependent pathway and subsequently targeted for proteasomal degradation. As to expression, isoform 3 is expressed in endothelial cells of vessels and capillaries in alveoli of the neonatal lung (at protein level). Expressed in lung, brain, heart and kidney. Isoform 2 is expressed in heart and lung. Isoform 2 is highly expressed in the epithelial cell layer of the cornea with lower expression in the layers of ganglion cells, inner nuclear cells, and rods and cones of the retina. Isoform 2 is expressed in the cerebellum only in the Purkinje cell layer.

It is found in the nucleus. Its subcellular location is the cytoplasm. It localises to the nucleus speckle. The protein localises to the mitochondrion. Functionally, acts as a transcriptional regulator in adaptive response to low oxygen tension. Acts as a regulator of hypoxia-inducible gene expression. Plays a role in the development of the cardiorespiratory system. Acts as a positive regulator of hypoxia-inducible gene expression. Associates to core DNA sequence 5'-TACGTG-3' within the hypoxia response element (HRE) of target gene promoters in a ARNT-dependent manner, and hence also participates in the transcriptional activation of reporter genes driven by HRE. In terms of biological role, attenuates the ability of transcription factor HIF1A, EPAS1 and the HIF1A-ARNT complex to bind to hypoxia-responsive elements (HRE) located within the enhancer/promoter of hypoxia-inducible target genes and hence inhibits HRE-driven transcriptional activation. Functions as an inhibitor of angiogenesis in hypoxic cells of the cornea. May act as a tumor suppressor. May also be involved in apoptosis. Its function is as follows. Attenuates the ability of transcription factor HIF1A, EPAS1 and the HIF1A-ARNT complex to bind to hypoxia-responsive elements (HRE) located within the enhancer/promoter of hypoxia-inducible target genes and hence inhibits HRE-driven transcriptional activation. Also plays a role in the development of the lung and heart during embryonic and neonatal stages. This is Hypoxia-inducible factor 3-alpha from Mus musculus (Mouse).